Reading from the N-terminus, the 753-residue chain is Polyribonucleotide nucleotidyltransferase (753 aa).

D523 and D529 together coordinate Mg(2+). Residues 589 to 648 (PRIISVRIPVDKIGAVIGPKGAMINQIQDDTGADITIEDDGTVLIGATDGASAEAARSAV) enclose the KH domain. In terms of domain architecture, S1 motif spans 660-732 (GERYLGTVVK…DRGKLSLSPV (73 aa)). A disordered region spans residues 733-753 (GAESDAVAETADAIESSQTEA).

The protein belongs to the polyribonucleotide nucleotidyltransferase family. Mg(2+) is required as a cofactor.

Its subcellular location is the cytoplasm. It catalyses the reaction RNA(n+1) + phosphate = RNA(n) + a ribonucleoside 5'-diphosphate. Involved in mRNA degradation. Catalyzes the phosphorolysis of single-stranded polyribonucleotides processively in the 3'- to 5'-direction. This Micrococcus luteus (strain ATCC 4698 / DSM 20030 / JCM 1464 / CCM 169 / CCUG 5858 / IAM 1056 / NBRC 3333 / NCIMB 9278 / NCTC 2665 / VKM Ac-2230) (Micrococcus lysodeikticus) protein is Polyribonucleotide nucleotidyltransferase.